A 150-amino-acid chain; its full sequence is UPF0208 membrane protein VV1_2222 (150 aa).

The next 2 helical transmembrane spans lie at 42–62 (FGIK…MAFN) and 70–90 (AIVM…WLGH).

This sequence belongs to the UPF0208 family.

It is found in the cell inner membrane. This is UPF0208 membrane protein VV1_2222 from Vibrio vulnificus (strain CMCP6).